Here is a 237-residue protein sequence, read N- to C-terminus: DCN1-like protein 5 (237 aa).

A phosphoserine mark is found at Ser-9, Ser-41, and Ser-48. One can recognise a DCUN1 domain in the interval 46–232 (FSSKKCLAWF…LLDEFVEWQK (187 aa)).

Part of a complex that contains DCUN1D5, CUL1 and RBX1; this interaction is bridged by CUL1. Interacts (via the DCUN1 domain) with the unneddylated cullins: interacts with CUL1, CUL2, CUL3, CUL4A, CUL4B and CUL5; these interactions promote the cullin neddylation and the identity of the cullin dictates the affinity of the interaction. Interacts (via DCUN1 domain) with UBE2M (N-terminally acetylated form) and probably with UBE2F (N-terminally acetylated form). May also interact with regulators or subunits of cullin-RING ligases such as RBX1, RNF7, ELOB and DDB1; these interactions are bridged by cullins. Interacts with CAND1; this interaction is bridged by cullins and strongly inhibits the neddylation of cullins. These CAND-cullin-DCNL complexes can only be neddylated in the presence of a substrate adapter. Post-translationally, phosphorylation at Ser-41 is independent of cullin's interaction. Phosphorylated in response to both TICAM1 and MYD88 dependent Toll-like receptor (TLR) pathway activation. Phosphorylated in response to IL1B stimulation. As to expression, weakly expressed in testis, skin and immune tissues (thymus, spleen and lymph nodes).

The protein resides in the nucleus. It is found in the cytoplasm. Its subcellular location is the cytoskeleton. The protein localises to the spindle. Contributes to the neddylation of all cullins by transferring NEDD8 from N-terminally acetylated NEDD8-conjugating E2s enzyme to different cullin C-terminal domain-RBX complexes which is necessary for the activation of cullin-RING E3 ubiquitin ligases (CRLs). May play a role in DNA damage response and may participate in cell proliferation and anchorage-independent cell growth. The polypeptide is DCN1-like protein 5 (Homo sapiens (Human)).